A 211-amino-acid chain; its full sequence is Protein-L-isoaspartate O-methyltransferase (211 aa).

S60 is an active-site residue.

The protein belongs to the methyltransferase superfamily. L-isoaspartyl/D-aspartyl protein methyltransferase family.

It is found in the cytoplasm. The enzyme catalyses [protein]-L-isoaspartate + S-adenosyl-L-methionine = [protein]-L-isoaspartate alpha-methyl ester + S-adenosyl-L-homocysteine. In terms of biological role, catalyzes the methyl esterification of L-isoaspartyl residues in peptides and proteins that result from spontaneous decomposition of normal L-aspartyl and L-asparaginyl residues. It plays a role in the repair and/or degradation of damaged proteins. In Pseudomonas paraeruginosa (strain DSM 24068 / PA7) (Pseudomonas aeruginosa (strain PA7)), this protein is Protein-L-isoaspartate O-methyltransferase.